The sequence spans 284 residues: Putative cysteine-rich repeat secretory protein 7 (284 aa).

An N-terminal signal peptide occupies residues 1-24 (MARIILTAPLFYFFFSLLSHQTMS). Gnk2-homologous domains lie at 26-128 (PQHM…NVSF) and 134-244 (SKPV…TFVL). The interval 247 to 284 (PAPSPSSLPPISPTSSPPLSLPPQLPPPLSQPPPPLST) is disordered.

This sequence belongs to the cysteine-rich repeat secretory protein family.

Its subcellular location is the secreted. This Arabidopsis thaliana (Mouse-ear cress) protein is Putative cysteine-rich repeat secretory protein 7 (CRRSP7).